The chain runs to 27 residues: Pregnancy-associated glycoprotein 59 (27 aa).

The protein belongs to the peptidase A1 family. Post-translationally, glycosylated. In terms of tissue distribution, placenta.

In Capra hircus (Goat), this protein is Pregnancy-associated glycoprotein 59 (PAG59).